A 375-amino-acid chain; its full sequence is POU domain, class 3, transcription factor 1-B (375 aa).

Disordered stretches follow at residues 1 to 29, 56 to 139, and 151 to 200; these read MAAT…RMHQ, MSLT…QPLI, and MLGP…PSSD. 3 stretches are compositionally biased toward polar residues: residues 107 to 117, 129 to 139, and 151 to 160; these read VHQQTPSSHAW, SPGSNSHQPLI, and MLGPQASSLH. Residues 162–178 show a composition bias toward basic and acidic residues; the sequence is SMRDPLHDDPGVHDTHV. One can recognise a POU-specific domain in the interval 194 to 268; that stretch reads EDAPSSDDLE…LLNKWLEETD (75 aa). Positions 286–345 form a DNA-binding region, homeobox; sequence KRKKRTSIEVGVKGALENHFLKCPKPSAHEITSLADSLQLEKEVVRVWFCNRRQKEKRMT.

Belongs to the POU transcription factor family. Class-3 subfamily.

The protein resides in the nucleus. In terms of biological role, acts as a transcription factor. May play a role in neuronal differentiation. The sequence is that of POU domain, class 3, transcription factor 1-B (pou3f1-b) from Xenopus laevis (African clawed frog).